Reading from the N-terminus, the 326-residue chain is MTERYADKQIKLFSLTSNLPIAEKIAKAAGIPLGKMSSRQFSDGEIMINIEETVRGDDIYIIQSTSFPVNDNLWELLIMIDACKRASANTVNIVLPYFGYSRQDRVAKPREPITAKLVANMLTKAGIDRVVTLDLHAVQVQGFFDIPVDNLFTVPLFAERYSKLGLSGSDVVVVSPKNSGIKRARSLAEYLDSPIAIIDYAQDDSEREQGYIIGDVSGKKAILIDDILNTGKTFAEAAKILERSGATDTYAVASHGLFAGGAAEVLETAPIKEIIVTDSVKTKNRVPENVTYLSASDLIAEAIIRIHERRPLSPLFSYQPKGKNNA.

ATP contacts are provided by residues 43–45 and 102–103; these read DGE and RQ. Mg(2+) is bound at residue His136. D-ribose 5-phosphate is bound by residues Asp225 and 229-233; that span reads NTGKT.

As to quaternary structure, homohexamer. Mg(2+) serves as cofactor.

It is found in the cytoplasm. It catalyses the reaction D-ribose 5-phosphate + ATP = 5-phospho-alpha-D-ribose 1-diphosphate + AMP + H(+). Its pathway is metabolic intermediate biosynthesis; 5-phospho-alpha-D-ribose 1-diphosphate biosynthesis; 5-phospho-alpha-D-ribose 1-diphosphate from D-ribose 5-phosphate (route I): step 1/1. Involved in the biosynthesis of the central metabolite phospho-alpha-D-ribosyl-1-pyrophosphate (PRPP) via the transfer of pyrophosphoryl group from ATP to 1-hydroxyl of ribose-5-phosphate (Rib-5-P). The chain is Putative ribose-phosphate pyrophosphokinase 2 from Streptococcus pyogenes serotype M6 (strain ATCC BAA-946 / MGAS10394).